A 67-amino-acid chain; its full sequence is uncharacterized protein (67 aa).

This is an uncharacterized protein from Archaeoglobus fulgidus (strain ATCC 49558 / DSM 4304 / JCM 9628 / NBRC 100126 / VC-16).